The following is a 282-amino-acid chain: Aquaporin-6 (282 aa).

At 1-25 (MDAVEPGGRGWASMLACRLWKAISR) the chain is on the cytoplasmic side. Residues 26–46 (ALFAEFLATGLYVFFGVGSVM) form a helical membrane-spanning segment. The Extracellular segment spans residues 47–54 (RWPTALPS). Residues 55-73 (VLQIAITFNLVTAMAVQVT) traverse the membrane as a helical segment. At 74–78 (WKASG) the chain is on the cytoplasmic side. Residues 79-88 (AHANPAVTLA) constitute an intramembrane region (discontinuously helical). Positions 82–84 (NPA) match the NPA 1 motif. The Cytoplasmic portion of the chain corresponds to 89–99 (FLVGSHISLPR). The helical transmembrane segment at 100–121 (AVAYVAAQLVGATVGAALLYGV) threads the bilayer. At 122-141 (MPGDIRETLGINVVRNSVST) the chain is on the extracellular side. A helical membrane pass occupies residues 142–162 (GQAVAVELLLTLQLVLCVFAS). The Cytoplasmic portion of the chain corresponds to 163–168 (TDSRQT). A helical membrane pass occupies residues 169-188 (SGSPATMIGISVALGHLIGI). The Extracellular segment spans residues 189-192 (HFTG). The discontinuously helical intramembrane region spans 193–205 (CSMNPARSFGPAI). The NPA 2 motif lies at 196–198 (NPA). Over 206–213 (IIGKFTVH) the chain is Extracellular. A helical membrane pass occupies residues 214–234 (WVFWVGPLMGALLASLIYNFV). The Cytoplasmic segment spans residues 235–282 (LFPDTKTLAQRLAILTGTVEVGTGAGAGAEPLKKESQPGSGAVEMESV). The segment at 260–282 (GAGAEPLKKESQPGSGAVEMESV) is disordered.

The protein belongs to the MIP/aquaporin (TC 1.A.8) family. As to quaternary structure, homotetramer; each monomer provides an independent solute pore.

Its subcellular location is the cytoplasmic vesicle membrane. The catalysed reaction is nitrate(in) = nitrate(out). It carries out the reaction iodide(out) = iodide(in). The enzyme catalyses bromide(in) = bromide(out). It catalyses the reaction chloride(in) = chloride(out). The catalysed reaction is Na(+)(in) = Na(+)(out). It carries out the reaction H2O(in) = H2O(out). The enzyme catalyses CO2(out) = CO2(in). It catalyses the reaction NH4(+)(in) = NH4(+)(out). In terms of biological role, aquaporins form homotetrameric transmembrane channels, with each monomer independently mediating water transport across the plasma membrane along its osmotic gradient. Unlike classical aquaporins, AQP6 is an intracellular channel with selective anion permeability, particularly for nitrate, and exhibits very low water permeability. It may also facilitate the transport of gases, such as CO2 and NH4(+), as demonstrated in vitro. In Homo sapiens (Human), this protein is Aquaporin-6.